The sequence spans 503 residues: Geissoschizine oxidase (503 aa).

Residues 7 to 27 (FSSPSFFFLLPFLFLLIKPLI) traverse the membrane as a helical segment. Cys441 contacts heme.

It belongs to the cytochrome P450 family. Heme is required as a cofactor.

It localises to the membrane. The catalysed reaction is (19E)-geissoschizine + reduced [NADPH--hemoprotein reductase] + O2 = akuammicine + formate + oxidized [NADPH--hemoprotein reductase] + H2O + H(+). It carries out the reaction (19E)-geissoschizine + reduced [NADPH--hemoprotein reductase] + O2 = 3,17-didehydrostemmadenine + oxidized [NADPH--hemoprotein reductase] + 2 H2O. It catalyses the reaction 3,17-didehydrostemmadenine = 17-dehydropreakuammicine. It participates in alkaloid biosynthesis. Monooxygenase involved in the biosynthesis of curare monoterpene indole alkaloids (MIAs), natural products such as diaboline, a pharmacologically active compound used to regulate blood pressure. Curare alkaloids act as animal glycine receptor antagonists. Catalyzes the conversion of geissoschizine to dehydropreakuammicine by cyclization, which is spontaneously converted into akuammicine by aromatization. This chain is Geissoschizine oxidase, found in Strychnos sp.